The following is a 2359-amino-acid chain: Pre-mRNA-processing-splicing factor 8B (2359 aa).

A disordered region spans residues M1–A50. A compositionally biased stretch (polar residues) spans T32 to T41. Residues T2129–G2260 form the MPN domain.

The protein localises to the nucleus. In terms of biological role, functions as a scaffold that mediates the ordered assembly of spliceosomal proteins and snRNAs. Required for the assembly of the U4/U6-U5 tri-snRNP complex. This is Pre-mRNA-processing-splicing factor 8B from Arabidopsis thaliana (Mouse-ear cress).